The chain runs to 261 residues: NAD-capped RNA hydrolase NudC (261 aa).

Positions 25 and 69 each coordinate substrate. 2 residues coordinate Zn(2+): Cys-98 and Cys-101. Glu-111 contributes to the substrate binding site. Cys-116 and Cys-119 together coordinate Zn(2+). Substrate is bound at residue Tyr-124. A Nudix hydrolase domain is found at 125 to 248 (PQIAPCVIVA…TVARRLIEDT (124 aa)). The a divalent metal cation site is built by Ala-158, Glu-174, and Glu-178. The Nudix box signature appears at 159 to 180 (GFVEVGETLEQAVSREVLEESN). Substrate is bound at residue 192–199 (QPWPFPHS). Glu-219 serves as a coordination point for a divalent metal cation. Ala-241 is a binding site for substrate.

This sequence belongs to the Nudix hydrolase family. NudC subfamily. In terms of assembly, homodimer. Mg(2+) serves as cofactor. The cofactor is Mn(2+). It depends on Zn(2+) as a cofactor.

The enzyme catalyses a 5'-end NAD(+)-phospho-ribonucleoside in mRNA + H2O = a 5'-end phospho-adenosine-phospho-ribonucleoside in mRNA + beta-nicotinamide D-ribonucleotide + 2 H(+). It catalyses the reaction NAD(+) + H2O = beta-nicotinamide D-ribonucleotide + AMP + 2 H(+). It carries out the reaction NADH + H2O = reduced beta-nicotinamide D-ribonucleotide + AMP + 2 H(+). MRNA decapping enzyme that specifically removes the nicotinamide adenine dinucleotide (NAD) cap from a subset of mRNAs by hydrolyzing the diphosphate linkage to produce nicotinamide mononucleotide (NMN) and 5' monophosphate mRNA. The NAD-cap is present at the 5'-end of some mRNAs and stabilizes RNA against 5'-processing. Has preference for mRNAs with a 5'-end purine. Catalyzes the hydrolysis of a broad range of dinucleotide pyrophosphates. The polypeptide is NAD-capped RNA hydrolase NudC (Yersinia enterocolitica serotype O:8 / biotype 1B (strain NCTC 13174 / 8081)).